The chain runs to 212 residues: ATP phosphoribosyltransferase (212 aa).

Belongs to the ATP phosphoribosyltransferase family. Short subfamily. Heteromultimer composed of HisG and HisZ subunits.

The protein localises to the cytoplasm. The catalysed reaction is 1-(5-phospho-beta-D-ribosyl)-ATP + diphosphate = 5-phospho-alpha-D-ribose 1-diphosphate + ATP. Its pathway is amino-acid biosynthesis; L-histidine biosynthesis; L-histidine from 5-phospho-alpha-D-ribose 1-diphosphate: step 1/9. Catalyzes the condensation of ATP and 5-phosphoribose 1-diphosphate to form N'-(5'-phosphoribosyl)-ATP (PR-ATP). Has a crucial role in the pathway because the rate of histidine biosynthesis seems to be controlled primarily by regulation of HisG enzymatic activity. In Prochlorococcus marinus (strain MIT 9312), this protein is ATP phosphoribosyltransferase.